We begin with the raw amino-acid sequence, 193 residues long: Acyl carrier protein phosphodiesterase (193 aa).

This sequence belongs to the AcpH family.

It carries out the reaction holo-[ACP] + H2O = apo-[ACP] + (R)-4'-phosphopantetheine + H(+). Functionally, converts holo-ACP to apo-ACP by hydrolytic cleavage of the phosphopantetheine prosthetic group from ACP. The sequence is that of Acyl carrier protein phosphodiesterase from Shigella boydii serotype 4 (strain Sb227).